A 158-amino-acid polypeptide reads, in one-letter code: Non-secretory ribonuclease (158 aa).

Positions 1 to 27 (MVPKLFTSQICLLPLLGLLSAEGSPHA) are cleaved as a signal peptide. The active-site Proton acceptor is the H42. At Y60 the chain carries 3'-nitrotyrosine. Substrate is bound at residue 65–69 (KNKNT). Residues N86, N92, and N111 are each glycosylated (N-linked (GlcNAc...) asparagine). Residue H153 is the Proton donor of the active site.

It belongs to the pancreatic ribonuclease family. In terms of assembly, interacts with and forms a tight 1:1 complex with RNH1. Dimerization of two such complexes may occur.

It is found in the lysosome. The protein resides in the cytoplasmic granule. It catalyses the reaction an [RNA] containing cytidine + H2O = an [RNA]-3'-cytidine-3'-phosphate + a 5'-hydroxy-ribonucleotide-3'-[RNA].. It carries out the reaction an [RNA] containing uridine + H2O = an [RNA]-3'-uridine-3'-phosphate + a 5'-hydroxy-ribonucleotide-3'-[RNA].. This is a non-secretory ribonuclease. It is a pyrimidine specific nuclease with a slight preference for U. Cytotoxin and helminthotoxin. Possesses a wide variety of biological activities. The chain is Non-secretory ribonuclease (RNASE2) from Callithrix jacchus (White-tufted-ear marmoset).